The sequence spans 739 residues: Polyphosphate kinase (739 aa).

Residues Trp-22 to Pro-45 form a disordered region. Positions Ser-27–Ser-40 are enriched in low complexity. Position 87 (Asn-87) interacts with ATP. Residues Arg-428 and Arg-458 each contribute to the Mg(2+) site. The active-site Phosphohistidine intermediate is the His-488. ATP-binding residues include Tyr-521, Arg-621, and His-649. The disordered stretch occupies residues Gln-714–Arg-739. Over residues Gln-724–Arg-739 the composition is skewed to basic and acidic residues.

It belongs to the polyphosphate kinase 1 (PPK1) family. Requires Mg(2+) as cofactor. Post-translationally, an intermediate of this reaction is the autophosphorylated ppk in which a phosphate is covalently linked to a histidine residue through a N-P bond.

It catalyses the reaction [phosphate](n) + ATP = [phosphate](n+1) + ADP. In terms of biological role, catalyzes the reversible transfer of the terminal phosphate of ATP to form a long-chain polyphosphate (polyP). The sequence is that of Polyphosphate kinase from Mycobacterium leprae (strain TN).